The chain runs to 394 residues: Actin-related protein 2-A (394 aa).

Residues 160–162 (GDG), 214–218 (RMMKE), and 305–310 (GGSTMY) each bind ATP.

Belongs to the actin family. ARP2 subfamily. In terms of assembly, component of the Arp2/3 complex composed of actr2/arp2, actr3/arp3, arpc1b, arpc2, arpc3, arpc4 and arpc5.

It is found in the cytoplasm. Its subcellular location is the cytoskeleton. The protein resides in the cell projection. It localises to the nucleus. Its function is as follows. ATP-binding component of the Arp2/3 complex, a multiprotein complex that mediates actin polymerization upon stimulation by nucleation-promoting factor (NPF). The Arp2/3 complex mediates the formation of branched actin networks in the cytoplasm, providing the force for cell motility. Seems to contact the pointed end of the daughter actin filament. In addition to its role in the cytoplasmic cytoskeleton, the Arp2/3 complex also promotes actin polymerization in the nucleus, thereby regulating gene transcription and repair of damaged DNA. The Arp2/3 complex promotes homologous recombination (HR) repair in response to DNA damage by promoting nuclear actin polymerization, leading to drive motility of double-strand breaks (DSBs). In Danio rerio (Zebrafish), this protein is Actin-related protein 2-A (actr2a).